The sequence spans 554 residues: Exodeoxyribonuclease 7 large subunit (554 aa).

This sequence belongs to the XseA family. Heterooligomer composed of large and small subunits.

The protein localises to the cytoplasm. The catalysed reaction is Exonucleolytic cleavage in either 5'- to 3'- or 3'- to 5'-direction to yield nucleoside 5'-phosphates.. Its function is as follows. Bidirectionally degrades single-stranded DNA into large acid-insoluble oligonucleotides, which are then degraded further into small acid-soluble oligonucleotides. This is Exodeoxyribonuclease 7 large subunit from Chlamydia pneumoniae (Chlamydophila pneumoniae).